The following is a 233-amino-acid chain: Lipoprotein-releasing system ATP-binding protein LolD (233 aa).

Positions 10–233 constitute an ABC transporter domain; that stretch reads YRLEGVGKEY…AGELYDQHRP (224 aa). An ATP-binding site is contributed by 46 to 53; sequence GASGSGKS.

Belongs to the ABC transporter superfamily. Lipoprotein translocase (TC 3.A.1.125) family. In terms of assembly, the complex is composed of two ATP-binding proteins (LolD) and two transmembrane proteins (LolC and LolE).

The protein resides in the cell inner membrane. Functionally, part of the ABC transporter complex LolCDE involved in the translocation of mature outer membrane-directed lipoproteins, from the inner membrane to the periplasmic chaperone, LolA. Responsible for the formation of the LolA-lipoprotein complex in an ATP-dependent manner. In Nitratidesulfovibrio vulgaris (strain ATCC 29579 / DSM 644 / CCUG 34227 / NCIMB 8303 / VKM B-1760 / Hildenborough) (Desulfovibrio vulgaris), this protein is Lipoprotein-releasing system ATP-binding protein LolD.